The following is a 254-amino-acid chain: Triosephosphate isomerase (254 aa).

Asparagine 9–lysine 11 is a substrate binding site. Histidine 96 serves as the catalytic Electrophile. Glutamate 169 serves as the catalytic Proton acceptor. Substrate contacts are provided by residues glycine 175, serine 215, and glycine 236–glycine 237.

This sequence belongs to the triosephosphate isomerase family. As to quaternary structure, homodimer.

It localises to the cytoplasm. The enzyme catalyses D-glyceraldehyde 3-phosphate = dihydroxyacetone phosphate. The protein operates within carbohydrate biosynthesis; gluconeogenesis. It functions in the pathway carbohydrate degradation; glycolysis; D-glyceraldehyde 3-phosphate from glycerone phosphate: step 1/1. In terms of biological role, involved in the gluconeogenesis. Catalyzes stereospecifically the conversion of dihydroxyacetone phosphate (DHAP) to D-glyceraldehyde-3-phosphate (G3P). This Borrelia duttonii (strain Ly) protein is Triosephosphate isomerase.